A 330-amino-acid polypeptide reads, in one-letter code: 5'-AMP-activated protein kinase subunit gamma-1 (330 aa).

Polar residues predominate over residues 1-13 (METVTSSDSSSAV). The interval 1–26 (METVTSSDSSSAVENEHPQDTPESNN) is disordered. CBS domains are found at residues 43–103 (PTSS…KSAL), 125–187 (SFKP…PKPE), and 198–260 (IGTY…NLDV). ADP is bound by residues Arg-70, 85–90 (MLTITD), Val-130, 151–152 (HR), and Lys-170. AMP-binding positions include Arg-70, 85–90 (MLTITD), Val-130, His-151, 151–152 (HR), Lys-170, Thr-200, Ala-205, 226–227 (SA), and 242–245 (SKFD). ATP-binding positions include Arg-70, 85–90 (MLTITD), Val-130, 151–152 (HR), Arg-152, and Lys-170. The AMPK pseudosubstrate motif lies at 138 to 159 (LFDAVSSLIRNKIHRLPVIDPE). 242–245 (SKFD) serves as a coordination point for ADP. An ATP-binding site is contributed by 242-245 (SKFD). Ser-261 is modified (phosphoserine; by ULK1). Residue Thr-263 is modified to Phosphothreonine; by ULK1. An ADP-binding site is contributed by Arg-269. Position 269 (Arg-269) interacts with AMP. ATP is bound at residue Arg-269. Ser-270 bears the Phosphoserine; by ULK1 mark. The CBS 4 domain maps to 272–329 (YFEGVLKCYLHETLETIINRLVEAEVHRLVVVDENDVVKGIVSLSDILQALVLTGGEK). Residues Leu-277 and 298–299 (HR) each bind ADP. Residues Leu-277, His-298, 298-299 (HR), and 314-317 (SLSD) each bind AMP. ATP is bound by residues Leu-277 and 298–299 (HR).

The protein belongs to the 5'-AMP-activated protein kinase gamma subunit family. As to quaternary structure, AMPK is a heterotrimer of an alpha catalytic subunit (PRKAA1 or PRKAA2), a beta (PRKAB1 or PRKAB2) and a gamma non-catalytic subunits (PRKAG1, PRKAG2 or PRKAG3). Interacts with FNIP1 and FNIP2. Post-translationally, phosphorylated by ULK1 and ULK2; leading to negatively regulate AMPK activity and suggesting the existence of a regulatory feedback loop between ULK1, ULK2 and AMPK. In terms of processing, glycosylated; O-GlcNAcylated by OGT, promoting the AMP-activated protein kinase (AMPK) activity.

AMP/ATP-binding subunit of AMP-activated protein kinase (AMPK), an energy sensor protein kinase that plays a key role in regulating cellular energy metabolism. In response to reduction of intracellular ATP levels, AMPK activates energy-producing pathways and inhibits energy-consuming processes: inhibits protein, carbohydrate and lipid biosynthesis, as well as cell growth and proliferation. AMPK acts via direct phosphorylation of metabolic enzymes, and by longer-term effects via phosphorylation of transcription regulators. Also acts as a regulator of cellular polarity by remodeling the actin cytoskeleton; probably by indirectly activating myosin. Gamma non-catalytic subunit mediates binding to AMP, ADP and ATP, leading to activate or inhibit AMPK: AMP-binding results in allosteric activation of alpha catalytic subunit (PRKAA1 or PRKAA2) both by inducing phosphorylation and preventing dephosphorylation of catalytic subunits. ADP also stimulates phosphorylation, without stimulating already phosphorylated catalytic subunit. ATP promotes dephosphorylation of catalytic subunit, rendering the AMPK enzyme inactive. This is 5'-AMP-activated protein kinase subunit gamma-1 (PRKAG1) from Sus scrofa (Pig).